The following is a 207-amino-acid chain: Large ribosomal subunit protein uL4 (207 aa).

The disordered stretch occupies residues 49 to 78 (HAVKNRSAVSGGGRKPWRQKGTGRARQGSI).

It belongs to the universal ribosomal protein uL4 family. In terms of assembly, part of the 50S ribosomal subunit.

Functionally, one of the primary rRNA binding proteins, this protein initially binds near the 5'-end of the 23S rRNA. It is important during the early stages of 50S assembly. It makes multiple contacts with different domains of the 23S rRNA in the assembled 50S subunit and ribosome. Forms part of the polypeptide exit tunnel. The polypeptide is Large ribosomal subunit protein uL4 (Streptococcus agalactiae serotype Ia (strain ATCC 27591 / A909 / CDC SS700)).